A 105-amino-acid chain; its full sequence is Large ribosomal subunit protein bL21 (105 aa).

Belongs to the bacterial ribosomal protein bL21 family. In terms of assembly, part of the 50S ribosomal subunit. Contacts protein L20.

Its function is as follows. This protein binds to 23S rRNA in the presence of protein L20. In Rhizobium johnstonii (strain DSM 114642 / LMG 32736 / 3841) (Rhizobium leguminosarum bv. viciae), this protein is Large ribosomal subunit protein bL21.